Here is a 483-residue protein sequence, read N- to C-terminus: Protein FIZZY-RELATED 2 (483 aa).

A disordered region spans residues 1–28; the sequence is MEEEDPTASNVITNSNSSSMRNLSPAMN. Polar residues predominate over residues 7–28; sequence TASNVITNSNSSSMRNLSPAMN. WD repeat units follow at residues 174-211, 215-254, 257-294, 298-337, 340-382, 384-425, and 428-467; these read QDDF…VTKL, GAED…RTRT, GHRL…DHVS, GHKS…PVLK, EHTA…HLSS, DTCS…KIAT, and GHTY…KSQN.

It belongs to the WD repeat CDC20/Fizzy family. In terms of assembly, associates with the APC/C complex. Interacts with CDC20-1, CDC20-2, CYCA1-1, CYCA1-2, CYCA3-4, CYCB1-1 and CYCB1-2. Binds to GIG1 and PYM. In terms of tissue distribution, expressed in seedlings, flowers, leaves and roots. Expressed in the differentiating cell files of the root elongation zone.

The protein localises to the nucleus. Its pathway is protein modification; protein ubiquitination. In terms of biological role, activator protein that regulates the ubiquitin ligase activity and substrate specificity of the anaphase promoting complex/cyclosome (APC/C). Necessary and sufficient for endoreduplication and correct cell expansion. Controls meristem size by stimulating endoreduplication in the elongation zone. The protein is Protein FIZZY-RELATED 2 (FZR2) of Arabidopsis thaliana (Mouse-ear cress).